The chain runs to 232 residues: Flagellar L-ring protein (232 aa).

A signal peptide spans 1–15 (MKKVLFYVLPFAFFG). Residue Cys16 is the site of N-palmitoyl cysteine attachment. The S-diacylglycerol cysteine moiety is linked to residue Cys16.

This sequence belongs to the FlgH family. The basal body constitutes a major portion of the flagellar organelle and consists of four rings (L,P,S, and M) mounted on a central rod.

It is found in the cell outer membrane. It localises to the bacterial flagellum basal body. In terms of biological role, assembles around the rod to form the L-ring and probably protects the motor/basal body from shearing forces during rotation. This Campylobacter jejuni subsp. jejuni serotype O:23/36 (strain 81-176) protein is Flagellar L-ring protein.